The sequence spans 562 residues: Glucan 1,3-beta-glucosidase 2 (562 aa).

The signal sequence occupies residues 1–22; that stretch reads MPLKSFFFSAFLVLCLSKFTQG. 7 N-linked (GlcNAc...) asparagine glycosylation sites follow: N50, N77, N86, N90, N106, N157, and N220. E254 functions as the Proton donor in the catalytic mechanism. N-linked (GlcNAc...) asparagine glycans are attached at residues N281, N285, N310, N317, and N322. The active-site Nucleophile is H334. N401, N480, and N539 each carry an N-linked (GlcNAc...) asparagine glycan.

The protein belongs to the glycosyl hydrolase 5 (cellulase A) family.

Its subcellular location is the cell membrane. It carries out the reaction Successive hydrolysis of beta-D-glucose units from the non-reducing ends of (1-&gt;3)-beta-D-glucans, releasing alpha-glucose.. The chain is Glucan 1,3-beta-glucosidase 2 (EXG2) from Saccharomyces cerevisiae (strain ATCC 204508 / S288c) (Baker's yeast).